The chain runs to 230 residues: Protein GrpE (230 aa).

Disordered stretches follow at residues 1–26 (MADEKNKPENPDLDQRDINNPRDREA) and 209–230 (GVSKGGPKVSAENGASTSEDNA). Residues 221–230 (NGASTSEDNA) show a composition bias toward polar residues.

It belongs to the GrpE family. Homodimer.

It is found in the cytoplasm. Functionally, participates actively in the response to hyperosmotic and heat shock by preventing the aggregation of stress-denatured proteins, in association with DnaK and GrpE. It is the nucleotide exchange factor for DnaK and may function as a thermosensor. Unfolded proteins bind initially to DnaJ; upon interaction with the DnaJ-bound protein, DnaK hydrolyzes its bound ATP, resulting in the formation of a stable complex. GrpE releases ADP from DnaK; ATP binding to DnaK triggers the release of the substrate protein, thus completing the reaction cycle. Several rounds of ATP-dependent interactions between DnaJ, DnaK and GrpE are required for fully efficient folding. This is Protein GrpE from Brucella suis biovar 1 (strain 1330).